The chain runs to 360 residues: Peptide chain release factor 1 (360 aa).

Position 235 is an N5-methylglutamine (Gln-235).

This sequence belongs to the prokaryotic/mitochondrial release factor family. In terms of processing, methylated by PrmC. Methylation increases the termination efficiency of RF1.

It is found in the cytoplasm. Its function is as follows. Peptide chain release factor 1 directs the termination of translation in response to the peptide chain termination codons UAG and UAA. The chain is Peptide chain release factor 1 from Burkholderia cenocepacia (strain ATCC BAA-245 / DSM 16553 / LMG 16656 / NCTC 13227 / J2315 / CF5610) (Burkholderia cepacia (strain J2315)).